A 219-amino-acid chain; its full sequence is MSQPILGYWDIRGYAQPIRLLLTYSGVDFVDKRYQIGPAPDFDRSEWLNEKFNLGLDFPNLPYYIDGDMKMTQTFAILRYLGRKYKLNGSNDHEEIRISMAEQQTEDMMAAMIRVCYDANCDKLKPDYLKSLPDCLKLMSKFVGEHAFIAGANISYVDFNLYEYLCHVKVMVPEVFGQFENLKRYVERMESLPRVSDYIKKQQPKTFNAPTSKWNASYA.

The region spanning 2-89 is the GST N-terminal domain; it reads SQPILGYWDI…YLGRKYKLNG (88 aa). Residues 8–9, 44–47, lysine 51, 60–61, and 73–74 each bind glutathione; these read YW, RSEW, NL, and QT. Residues 91–207 form the GST C-terminal domain; sequence NDHEEIRISM…YIKKQQPKTF (117 aa). Tyrosine 117 lines the substrate pocket.

It belongs to the GST superfamily. Mu family. As to quaternary structure, homodimer.

It localises to the cytoplasm. It carries out the reaction RX + glutathione = an S-substituted glutathione + a halide anion + H(+). The polypeptide is Glutathione S-transferase (Dermatophagoides pteronyssinus (European house dust mite)).